The chain runs to 309 residues: Ornithine carbamoyltransferase (309 aa).

Carbamoyl phosphate contacts are provided by residues 56-59 (STRT), Gln83, Arg107, and 134-137 (HPCQ). Residues Asn165, Asp223, and 227–228 (SM) contribute to the L-ornithine site. Residues 263 to 264 (CL) and Arg291 contribute to the carbamoyl phosphate site.

The protein belongs to the aspartate/ornithine carbamoyltransferase superfamily. OTCase family.

The protein localises to the cytoplasm. The enzyme catalyses carbamoyl phosphate + L-ornithine = L-citrulline + phosphate + H(+). It functions in the pathway amino-acid biosynthesis; L-arginine biosynthesis; L-arginine from L-ornithine and carbamoyl phosphate: step 1/3. Reversibly catalyzes the transfer of the carbamoyl group from carbamoyl phosphate (CP) to the N(epsilon) atom of ornithine (ORN) to produce L-citrulline. The protein is Ornithine carbamoyltransferase of Burkholderia lata (strain ATCC 17760 / DSM 23089 / LMG 22485 / NCIMB 9086 / R18194 / 383).